The following is a 427-amino-acid chain: Putative FBD-associated F-box protein At3g50710 (427 aa).

In terms of domain architecture, F-box spans 1-53 (MDRISNLSDDLLLKIVSSLPTKDVVVTMLLSKRWKFLWMMVPKLRFDDEFELE). In terms of domain architecture, FBD spans 345-395 (HWEEPSSVPQCLLFHLNIFEWKYYNAGDEEKKVVAYILKNARQLKTATFSA).

The polypeptide is Putative FBD-associated F-box protein At3g50710 (Arabidopsis thaliana (Mouse-ear cress)).